A 302-amino-acid polypeptide reads, in one-letter code: Oxygen-dependent coproporphyrinogen-III oxidase (302 aa).

Substrate is bound at residue Ser-94. His-98 and His-108 together coordinate a divalent metal cation. Residue His-108 is the Proton donor of the active site. 110-112 serves as a coordination point for substrate; it reads NVR. 2 residues coordinate a divalent metal cation: His-147 and His-177. Residues 242-277 are important for dimerization; that stretch reads YVEFNLVWDRGTLFGLQTGGRTESILMSMPPLVRWE. 260-262 contributes to the substrate binding site; it reads GGR.

The protein belongs to the aerobic coproporphyrinogen-III oxidase family. In terms of assembly, homodimer. It depends on a divalent metal cation as a cofactor.

Its subcellular location is the cytoplasm. It catalyses the reaction coproporphyrinogen III + O2 + 2 H(+) = protoporphyrinogen IX + 2 CO2 + 2 H2O. Its pathway is porphyrin-containing compound metabolism; protoporphyrin-IX biosynthesis; protoporphyrinogen-IX from coproporphyrinogen-III (O2 route): step 1/1. In terms of biological role, involved in the heme biosynthesis. Catalyzes the aerobic oxidative decarboxylation of propionate groups of rings A and B of coproporphyrinogen-III to yield the vinyl groups in protoporphyrinogen-IX. The polypeptide is Oxygen-dependent coproporphyrinogen-III oxidase (Erwinia tasmaniensis (strain DSM 17950 / CFBP 7177 / CIP 109463 / NCPPB 4357 / Et1/99)).